Consider the following 466-residue polypeptide: tRNA(Ile)-lysidine synthase (466 aa).

An ATP-binding site is contributed by 26 to 31; the sequence is SGGSDS.

The protein belongs to the tRNA(Ile)-lysidine synthase family.

The protein resides in the cytoplasm. It catalyses the reaction cytidine(34) in tRNA(Ile2) + L-lysine + ATP = lysidine(34) in tRNA(Ile2) + AMP + diphosphate + H(+). In terms of biological role, ligates lysine onto the cytidine present at position 34 of the AUA codon-specific tRNA(Ile) that contains the anticodon CAU, in an ATP-dependent manner. Cytidine is converted to lysidine, thus changing the amino acid specificity of the tRNA from methionine to isoleucine. The chain is tRNA(Ile)-lysidine synthase from Oceanobacillus iheyensis (strain DSM 14371 / CIP 107618 / JCM 11309 / KCTC 3954 / HTE831).